The following is a 700-amino-acid chain: AP-2 complex subunit beta (700 aa).

The disordered stretch occupies residues 625–700; sequence VGNSFPPTGA…RKLSMKRPFS (76 aa). Residue Ser649 is modified to Phosphoserine. A Phosphothreonine modification is found at Thr652. Over residues 653–663 the composition is skewed to basic and acidic residues; it reads AMMDDYDKPAE. The residue at position 683 (Ser683) is a Phosphoserine.

The protein belongs to the adaptor complexes large subunit family. Adaptor protein complex 2 (AP-2) is a heterotetramer composed of two large adaptins (alpha-type subunit APL3 and beta-type subunit APL1), a medium chain (mu-type subunit APM4) and a small adaptin (sigma-type subunit APS2). Interacts with APS2.

It localises to the cell membrane. Its subcellular location is the membrane. The protein resides in the coated pit. Functionally, adaptins are components of the adaptor complexes which link clathrin to receptors in coated vesicles. Clathrin-associated protein complexes are believed to interact with the cytoplasmic tails of membrane proteins, leading to their selection and concentration. Beta adaptin is a subunit of the plasma membrane adaptor. This Saccharomyces cerevisiae (strain ATCC 204508 / S288c) (Baker's yeast) protein is AP-2 complex subunit beta (APL1).